Here is a 666-residue protein sequence, read N- to C-terminus: Zinc finger MYM-type protein 5 (666 aa).

Residues lysine 85, lysine 88, lysine 146, and lysine 163 each participate in a glycyl lysine isopeptide (Lys-Gly) (interchain with G-Cter in SUMO2) cross-link. The interval 87 to 106 is disordered; the sequence is EKPQGNYSVIPPPSRDLASQ. Residues 191 to 212 form a disordered region; that stretch reads SPDSWISQSASFPRNQKQPGVD. The segment covering 194–208 has biased composition (polar residues); it reads SWISQSASFPRNQKQ. A Glycyl lysine isopeptide (Lys-Gly) (interchain with G-Cter in SUMO2) cross-link involves residue lysine 222. MYM-type zinc fingers lie at residues 262–296, 308–348, 355–390, and 401–428; these read HLFC…KKAD, QEFC…RHEV, HKLC…KSTG, and KRFC…ASEN. Residues lysine 440, lysine 452, lysine 459, and lysine 549 each participate in a glycyl lysine isopeptide (Lys-Gly) (interchain with G-Cter in SUMO2) cross-link.

Interacts (via N-terminal 120 amino acid region) with ETV5 (via C-terminal).

It is found in the nucleus. Functions as a transcriptional regulator. The chain is Zinc finger MYM-type protein 5 (ZMYM5) from Macaca fascicularis (Crab-eating macaque).